We begin with the raw amino-acid sequence, 225 residues long: Ribosome maturation factor RimM (225 aa).

In terms of domain architecture, PRC barrel spans Ala-144–Tyr-225.

This sequence belongs to the RimM family. Binds ribosomal protein uS19.

The protein localises to the cytoplasm. Its function is as follows. An accessory protein needed during the final step in the assembly of 30S ribosomal subunit, possibly for assembly of the head region. Essential for efficient processing of 16S rRNA. May be needed both before and after RbfA during the maturation of 16S rRNA. It has affinity for free ribosomal 30S subunits but not for 70S ribosomes. In Burkholderia orbicola (strain AU 1054), this protein is Ribosome maturation factor RimM.